We begin with the raw amino-acid sequence, 1123 residues long: Phytochrome A (1123 aa).

The span at 1–14 (MSSSRPSQSSTTSS) shows a compositional bias: low complexity. The tract at residues 1 to 20 (MSSSRPSQSSTTSSRSKHSA) is disordered. Residues 218-401 (SMERLCDTMV…VFAILVNKEL (184 aa)) form the GAF domain. Cys-323 contacts phytochromobilin. A PAS 1 domain is found at 617–687 (VTAEMVRLIE…KMLELALQGQ (71 aa)). Positions 690–746 (RNVEFEIKTHGPSRDSSPISLIVNACASKDVRDSVVGVCFIAQDITGQKSIMDKFTR) constitute a PAC domain. In terms of domain architecture, PAS 2 spans 747–821 (IEGDYRAIIQ…KNQEAFVNFG (75 aa)). Positions 901-1118 (YIRRQIRNPL…TFIISVELAV (218 aa)) constitute a Histidine kinase domain.

Belongs to the phytochrome family. In terms of assembly, homodimer. Post-translationally, contains one covalently linked phytochromobilin chromophore.

In terms of biological role, regulatory photoreceptor which exists in two forms that are reversibly interconvertible by light: the Pr form that absorbs maximally in the red region of the spectrum and the Pfr form that absorbs maximally in the far-red region. Photoconversion of Pr to Pfr induces an array of morphogenic responses, whereas reconversion of Pfr to Pr cancels the induction of those responses. Pfr controls the expression of a number of nuclear genes including those encoding the small subunit of ribulose-bisphosphate carboxylase, chlorophyll A/B binding protein, protochlorophyllide reductase, rRNA, etc. It also controls the expression of its own gene(s) in a negative feedback fashion. This Solanum tuberosum (Potato) protein is Phytochrome A (PHYA).